Consider the following 224-residue polypeptide: UPF0111 protein TC_0063 (224 aa).

This sequence belongs to the UPF0111 family.

The protein is UPF0111 protein TC_0063 of Chlamydia muridarum (strain MoPn / Nigg).